The following is a 319-amino-acid chain: Beta-ketoacyl-[acyl-carrier-protein] synthase III (319 aa).

Active-site residues include Cys113 and His246. An ACP-binding region spans residues 247-251 (QANIR). Asn276 is a catalytic residue.

It belongs to the thiolase-like superfamily. FabH family. In terms of assembly, homodimer.

Its subcellular location is the cytoplasm. The enzyme catalyses malonyl-[ACP] + acetyl-CoA + H(+) = 3-oxobutanoyl-[ACP] + CO2 + CoA. The protein operates within lipid metabolism; fatty acid biosynthesis. Its function is as follows. Catalyzes the condensation reaction of fatty acid synthesis by the addition to an acyl acceptor of two carbons from malonyl-ACP. Catalyzes the first condensation reaction which initiates fatty acid synthesis and may therefore play a role in governing the total rate of fatty acid production. Possesses both acetoacetyl-ACP synthase and acetyl transacylase activities. Its substrate specificity determines the biosynthesis of branched-chain and/or straight-chain of fatty acids. The protein is Beta-ketoacyl-[acyl-carrier-protein] synthase III of Ehrlichia canis (strain Jake).